Reading from the N-terminus, the 305-residue chain is tRNA dimethylallyltransferase (305 aa).

8-15 serves as a coordination point for ATP; it reads GPTAIGKS. 10–15 provides a ligand contact to substrate; the sequence is TAIGKS. Positions 33–36 are interaction with substrate tRNA; sequence DSMA.

It belongs to the IPP transferase family. Monomer. Requires Mg(2+) as cofactor.

It catalyses the reaction adenosine(37) in tRNA + dimethylallyl diphosphate = N(6)-dimethylallyladenosine(37) in tRNA + diphosphate. In terms of biological role, catalyzes the transfer of a dimethylallyl group onto the adenine at position 37 in tRNAs that read codons beginning with uridine, leading to the formation of N6-(dimethylallyl)adenosine (i(6)A). This chain is tRNA dimethylallyltransferase, found in Aquifex aeolicus (strain VF5).